Here is a 386-residue protein sequence, read N- to C-terminus: Phosphoglycerate kinase (386 aa).

Substrate contacts are provided by residues 21–23 (DLN), Arg36, 59–62 (HLGR), Arg112, and Arg145. ATP is bound by residues Lys196, Glu313, and 339–342 (GGDT).

This sequence belongs to the phosphoglycerate kinase family. In terms of assembly, monomer.

It is found in the cytoplasm. The enzyme catalyses (2R)-3-phosphoglycerate + ATP = (2R)-3-phospho-glyceroyl phosphate + ADP. Its pathway is carbohydrate degradation; glycolysis; pyruvate from D-glyceraldehyde 3-phosphate: step 2/5. The sequence is that of Phosphoglycerate kinase from Haemophilus influenzae (strain 86-028NP).